Here is a 663-residue protein sequence, read N- to C-terminus: Polyunsaturated fatty acid lipoxygenase ALOX15 (663 aa).

The PLAT domain occupies G2–C115. In terms of domain architecture, Lipoxygenase spans T116–I663. Positions 361, 366, 541, 545, and 663 each coordinate Fe cation.

This sequence belongs to the lipoxygenase family. Interacts with PEBP1; in response to IL13/interleukin-13, prevents the interaction of PEBP1 with RAF1 to activate the ERK signaling cascade. It depends on Fe cation as a cofactor. In terms of tissue distribution, detected in reticulocytes (at protein level).

The protein resides in the cytoplasm. The protein localises to the cytosol. Its subcellular location is the cell membrane. It is found in the lipid droplet. It catalyses the reaction (5Z,8Z,11Z,14Z)-eicosatetraenoate + O2 = (12S)-hydroperoxy-(5Z,8Z,10E,14Z)-eicosatetraenoate. The catalysed reaction is (5Z,8Z,11Z,14Z)-eicosatetraenoate + O2 = (15S)-hydroperoxy-(5Z,8Z,11Z,13E)-eicosatetraenoate. The enzyme catalyses (9Z,12Z)-octadecadienoate + O2 = (13S)-hydroperoxy-(9Z,11E)-octadecadienoate. It carries out the reaction (5Z,8Z,11Z,14Z)-eicosatetraenoate + 2 O2 = (14R,15S)-dihydroperoxy-(5Z,8Z,10E,12E)-eicosatetraenoate. It catalyses the reaction (5Z,8Z,11Z,14Z)-eicosatetraenoate + 2 O2 = (8S,15S)-dihydroperoxy-(5Z,9E,11Z,13E)-eicosatetraenoate. The catalysed reaction is (14S,15R)-epoxy-(5Z,8Z,11Z)-eicosatrienoate + O2 = (8S)-hydroperoxy-(14S,15R)-epoxy-(5Z,9E,11Z)-eicosatrienoate. The enzyme catalyses (14S,15R)-epoxy-(5Z,8Z,11Z)-eicosatrienoate + O2 = (12S)-hydroperoxy-(14S,15R)-epoxy-(5Z,8Z,10E)-eicosatrienoate. It carries out the reaction (14R,15S)-epoxy-(5Z,8Z,11Z)-eicosatrienoate + O2 = (5S)-hydroperoxy-(14R,15S)-epoxy-(6E,8Z,11Z)-eicosatrienoate. It catalyses the reaction (14R,15S)-epoxy-(5Z,8Z,11Z)-eicosatrienoate + O2 = (12S)-hydroperoxy-(14R,15S)-epoxy-(5Z,8Z,10E)-eicosatrienoate. The catalysed reaction is (15R)-hydroperoxy-(5Z,8Z,11Z,13E)-eicosatetraenoate = 15-oxo-(5Z,8Z,11Z,13E)-eicosatetraenoate + H2O. The enzyme catalyses (15S)-hydroperoxy-(5Z,8Z,11Z,13E)-eicosatetraenoate = (14S,15S)-epoxy-(5Z,8Z,10E,12E)-eicosatetraenoate + H2O. It carries out the reaction (12S)-hydroperoxy-(5Z,8Z,10E,14Z)-eicosatetraenoate = (8S)-hydroxy-(11S,12S)-epoxy-(5Z,9E,14Z)-eicosatrienoate. It catalyses the reaction (4Z,7Z,10Z,13Z,16Z)-docosapentaenoate + O2 = 14-hydroperoxy-(4Z,7Z,10Z,12E,16Z)-docosapentaenoate. The catalysed reaction is (7Z,10Z,13Z,16Z,19Z)-docosapentaenoate + O2 = 14-hydroperoxy-(7Z,10Z,12E,16Z,19Z)-docosapentaenoate. The enzyme catalyses (4Z,7Z,10Z,13Z,16Z,19Z)-docosahexaenoate + O2 = (14S)-hydroperoxy-(4Z,7Z,10Z,12E,16Z,19Z)-docosahexaenoate. It carries out the reaction (4Z,7Z,10Z,13Z,16Z,19Z)-docosahexaenoate + O2 = (17S)-hydroperoxy-(4Z,7Z,10Z,13Z,15E,19Z)-docosahexaenoate. It catalyses the reaction (7S)-hydroperoxy-(4Z,8E,10Z,13Z,16Z,19Z)-docosahexaenoate + O2 = (7S,14S)-dihydroperoxy-(4Z,8E,10Z,12E,16Z,19Z)-docosahexaenoate. The catalysed reaction is (7S)-hydroperoxy-(4Z,8E,10Z,13Z,16Z,19Z)-docosahexaenoate + O2 = (7S,17S)-dihydroperoxy-(4Z,8E,10Z,13Z,15E,19Z)-docosahexaenoate. The enzyme catalyses (4Z,7Z,10Z,13Z,16Z,19Z)-docosahexaenoate + O2 = (11S)-hydroperoxy-(4Z,7Z,9E,13Z,16Z,19Z)-docosahexaenoate. It carries out the reaction N-(5Z,8Z,11Z,14Z)-eicosatetraenoyl-taurine + O2 = N-(15S)-hydroperoxy-(5Z,8Z,11Z,13E)-eicosatetraenoyl-taurine. It catalyses the reaction N-(5Z,8Z,11Z,14Z)-eicosatetraenoyl-gamma-aminobutanoate + O2 = N-(15S)-hydroperoxy-(5Z,8Z,11Z,13E)-eicosatetraenoyl-gamma-aminobutanoate. The catalysed reaction is N-(5Z,8Z,11Z,14Z)-eicosatetraenoyl-glycine + O2 = N-(15S)-hydroperoxy-(5Z,8Z,11Z,13E)-eicosatetraenoyl-glycine. The enzyme catalyses N-(5Z,8Z,11Z,14Z)-eicosatetraenoyl-L-alanine + O2 = N-(15S)-hydroperoxy-(5Z,8Z,11Z,13E)-eicosatetraenoyl-alanine. It carries out the reaction N-(5Z,8Z,11Z,14Z)-eicosatetraenoyl-taurine + O2 = N-(12S)-hydroperoxy-(5Z,8Z,10E,14Z)-eicosatetraenoyl-taurine. It catalyses the reaction N-(5Z,8Z,11Z,14Z)-eicosatetraenoyl-gamma-aminobutanoate + O2 = N-(12S)-hydroperoxy-(5Z,8Z,10E,14Z)-eicosatetraenoyl-gamma-aminobutanoate. The catalysed reaction is N-(5Z,8Z,11Z,14Z)-eicosatetraenoyl-glycine + O2 = N-(12S)-hydroperoxy-(5Z,8Z,10E,14Z)-eicosatetraenoyl-glycine. The enzyme catalyses N-(5Z,8Z,11Z,14Z)-eicosatetraenoyl-L-alanine + O2 = N-(12S)-hydroperoxy-(5Z,8Z,10E,14Z)-eicosatetraenoyl-alanine. It functions in the pathway lipid metabolism; hydroperoxy eicosatetraenoic acid biosynthesis. Non-heme iron-containing dioxygenase that catalyzes the stereo-specific peroxidation of free and esterified polyunsaturated fatty acids generating a spectrum of bioactive lipid mediators. It inserts peroxyl groups at C12 or C15 of arachidonate ((5Z,8Z,11Z,14Z)-eicosatetraenoate) producing both 12-hydroperoxyeicosatetraenoate/12-HPETE and 15-hydroperoxyeicosatetraenoate/15-HPETE. It may then act on 12-HPETE to produce hepoxilins, which may show pro-inflammatory properties. Can also peroxidize linoleate ((9Z,12Z)-octadecadienoate) to 13-hydroperoxyoctadecadienoate. May participate in the sequential oxidations of DHA ((4Z,7Z,10Z,13Z,16Z,19Z)-docosahexaenoate) to generate specialized pro-resolving mediators (SPMs)like resolvin D5 ((7S,17S)-diHPDHA) and (7S,14S)-diHPDHA, that actively down-regulate the immune response and have anti-aggregation properties with platelets. Can convert epoxy fatty acids to hydroperoxy-epoxides derivatives followed by an intramolecular nucleophilic substitution leading to the formation of monocyclic endoperoxides. Plays an important role during the maintenance of self-tolerance by peroxidizing membrane-bound phosphatidylethanolamine which can then signal the sorting process for clearance of apoptotic cells during inflammation and prevent an autoimmune response. In addition to its role in the immune and inflammatory responses, this enzyme may play a role in epithelial wound healing in the cornea through production of lipoxin A4 (LXA(4)) and docosahexaenoic acid-derived neuroprotectin D1 (NPD1; 10R,17S-HDHA), both lipid autacoids exhibit anti-inflammatory and neuroprotective properties. Furthermore, it may regulate actin polymerization which is crucial for several biological processes such as the phagocytosis of apoptotic cells. It is also implicated in the generation of endogenous ligands for peroxisome proliferator activated receptor (PPAR-gamma), hence modulating macrophage development and function. It may also exert a negative effect on skeletal development by regulating bone mass through this pathway. As well as participates in ER stress and downstream inflammation in adipocytes, pancreatic islets, and liver. Finally, it is also involved in the cellular response to IL13/interleukin-13. The polypeptide is Polyunsaturated fatty acid lipoxygenase ALOX15 (Oryctolagus cuniculus (Rabbit)).